We begin with the raw amino-acid sequence, 322 residues long: MSDSLTELLLEIGKALIVLVGIVGAGAFMSFIERRLLALWQDRHGPNRVGPFGLFQLLADMIKMFFKEDWIPPFADRRIFILAPIIAFTAFILAFAVVPITPTWGVADLNVGLLYILAIAGLAVYAVLFAGWSSNNKYSLLGSLRASAQTLSYEVFLGLSLMGIVIQTGSFNLRDIVEAQAGLWNVVPQFLGFITFLFAGVAVTHRHPFDQPEAEQELADGYHIEYAGMKWGLFFVGEYIGIVLISSLIVTLFFGGWHGPWLPPFFWFALKTACFMVFFILLRASLPRPRFDQVMSFGWKVCLPLTLINMLITAAVVLMNVQ.

Helical transmembrane passes span 12-32, 79-99, 111-131, 151-171, 183-203, 234-254, 262-282, and 301-321; these read IGKA…MSFI, IFIL…AVVP, VGLL…LFAG, LSYE…TGSF, LWNV…GVAV, FFVG…TLFF, LPPF…FILL, and VCLP…LMNV.

The protein belongs to the complex I subunit 1 family. NDH-1 is composed of 13 different subunits. Subunits NuoA, H, J, K, L, M, N constitute the membrane sector of the complex.

The protein localises to the cell inner membrane. It catalyses the reaction a quinone + NADH + 5 H(+)(in) = a quinol + NAD(+) + 4 H(+)(out). In terms of biological role, NDH-1 shuttles electrons from NADH, via FMN and iron-sulfur (Fe-S) centers, to quinones in the respiratory chain. The immediate electron acceptor for the enzyme in this species is believed to be ubiquinone. Couples the redox reaction to proton translocation (for every two electrons transferred, four hydrogen ions are translocated across the cytoplasmic membrane), and thus conserves the redox energy in a proton gradient. This subunit may bind ubiquinone. This Shewanella oneidensis (strain ATCC 700550 / JCM 31522 / CIP 106686 / LMG 19005 / NCIMB 14063 / MR-1) protein is NADH-quinone oxidoreductase subunit H.